The sequence spans 126 residues: 5-carboxymethyl-2-hydroxymuconate Delta-isomerase (126 aa).

Catalysis depends on Pro2, which acts as the Proton acceptor; via imino nitrogen.

Homotrimer.

It catalyses the reaction (2E,4Z)-5-hydroxypenta-2,4-diene-1,2,5-tricarboxylate = (3E,5R)-5-carboxy-2-oxohept-3-enedioate. The protein operates within aromatic compound metabolism; 4-hydroxyphenylacetate degradation; pyruvate and succinate semialdehyde from 4-hydroxyphenylacetate: step 4/7. Its function is as follows. Transforms 5-carboxymethyl-2-hydroxy-muconic acid (CHM) into 5-oxo-pent-3-ene-1,2,5-tricarboxylic acid (OPET). The chain is 5-carboxymethyl-2-hydroxymuconate Delta-isomerase (hpcD) from Escherichia coli.